The sequence spans 953 residues: MPGKLRVHELAKQLGVTSKELLATLKDQGEFVKTASSTIEPPVVKKMKKHYESLGVTTEAPAASQEPKAKKPAAPKPAAPKPAATPQQAAKPAAPKPAAPKPAAEKKPAPKPAAKPVPKPGFSAAKAESSAPKPAAPKPAAPKPAAQSSTTATPGSMPRPQAKPAPKPGGRAPRVANNPFSSGPRPAPRPGGGNRSGNAPRPGGGPRPGGNRPQGGQGGPAERAPRPGGRGGQPRPQGGSRSQQSGGQERQGGGRRPSPAMMPTHPNPGQMPSRSNGSRNGRGGAGGQGGRPGFGGGRPGGGGSAGGRGGRRGGTAGAFGRPGGAPRKGRKSKRQKRNEYEAMQAPNVIGGVRLPDGGGATIRLARGASLSDFAEKINADAAALVQALFNLGEMVTATASVNEETLQLLGEEMNYKVEVVSPEDEDRELLESFDLQFGEDEGTEEDLAKRPPVVTVMGHVDHGKTRLLDTIRKTNVGSDEAGGITQGIGAYQVTVNIDDLSRKITFLDTPGHEAFTAMRARGAKSTDIAVLVVAADDGVMPQTVEAINHAKAADVPIVVAVNKIDKPGASPDKIRGQLTEYGLVPEEYGGDTMFVDISAKQNINIDGLLEAVLLTADASLDLRANPDMDAQGVAIEAHLDRGRGPVATVIVQRGTLRVGDSVVAGDAYGRVRRMVDEYGNDVEEAGPSRPVQMQGLNGVPGAGDNLLVVEDDRVARQIANQRNARKRNALAAKTRKRVSLEDLDSVLKETSTLNLILKGDNAGSVEALEDALLKIEVDDEVQLNIIDRGVGAVTQTNVSLAAASDAVIIAFNVRAEGKATEEANAEGVDIRYYTVIYRALEEVEQALKGMLKPIYEEREIGRAEIRAIFKASAVGLIAGCMVESGKVRRNASIRLLRDGTVVADNAKIESLRREKDDATEVAAGYECGMVLSYPDIQVGDIIEVFEQVEVPRT.

A disordered region spans residues 55 to 340; sequence GVTTEAPAAS…KSKRQKRNEY (286 aa). Positions 81 to 93 are enriched in low complexity; sequence KPAATPQQAAKPA. The segment covering 110–119 has biased composition (pro residues); the sequence is PKPAAKPVPK. 2 stretches are compositionally biased toward low complexity: residues 123-133 and 143-160; these read SAAKAESSAPK and KPAA…MPRP. A compositionally biased stretch (gly residues) spans 202–219; it reads PGGGPRPGGNRPQGGQGG. Residues 233–248 show a composition bias toward low complexity; that stretch reads QPRPQGGSRSQQSGGQ. Gly residues predominate over residues 280–323; the sequence is NGRGGAGGQGGRPGFGGGRPGGGGSAGGRGGRRGGTAGAFGRPG. Residues 327–336 show a composition bias toward basic residues; sequence RKGRKSKRQK. The region spanning 449–621 is the tr-type G domain; that stretch reads KRPPVVTVMG…VLLTADASLD (173 aa). The interval 458–465 is G1; the sequence is GHVDHGKT. 458–465 is a binding site for GTP; that stretch reads GHVDHGKT. A G2 region spans residues 483 to 487; the sequence is GITQG. The interval 508–511 is G3; the sequence is DTPG. Residues 508 to 512 and 562 to 565 each bind GTP; these read DTPGH and NKID. The tract at residues 562-565 is G4; it reads NKID. Residues 598–600 are G5; the sequence is SAK.

It belongs to the TRAFAC class translation factor GTPase superfamily. Classic translation factor GTPase family. IF-2 subfamily.

Its subcellular location is the cytoplasm. Its function is as follows. One of the essential components for the initiation of protein synthesis. Protects formylmethionyl-tRNA from spontaneous hydrolysis and promotes its binding to the 30S ribosomal subunits. Also involved in the hydrolysis of GTP during the formation of the 70S ribosomal complex. The protein is Translation initiation factor IF-2 of Corynebacterium diphtheriae (strain ATCC 700971 / NCTC 13129 / Biotype gravis).